The following is a 411-amino-acid chain: Diaminobutyrate--2-oxoglutarate transaminase (411 aa).

Lysine 262 carries the post-translational modification N6-(pyridoxal phosphate)lysine.

Belongs to the class-III pyridoxal-phosphate-dependent aminotransferase family. Pyridoxal 5'-phosphate is required as a cofactor.

The catalysed reaction is L-2,4-diaminobutanoate + 2-oxoglutarate = L-aspartate 4-semialdehyde + L-glutamate. It participates in amine and polyamine biosynthesis; ectoine biosynthesis; L-ectoine from L-aspartate 4-semialdehyde: step 1/3. Catalyzes reversively the conversion of L-aspartate beta-semialdehyde (ASA) to L-2,4-diaminobutyrate (DABA) by transamination with L-glutamate. This Vibrio cholerae serotype O1 (strain ATCC 39315 / El Tor Inaba N16961) protein is Diaminobutyrate--2-oxoglutarate transaminase (ectB).